A 211-amino-acid polypeptide reads, in one-letter code: ATP phosphoribosyltransferase (211 aa).

This sequence belongs to the ATP phosphoribosyltransferase family. Short subfamily. As to quaternary structure, heteromultimer composed of HisG and HisZ subunits.

The protein resides in the cytoplasm. The catalysed reaction is 1-(5-phospho-beta-D-ribosyl)-ATP + diphosphate = 5-phospho-alpha-D-ribose 1-diphosphate + ATP. It functions in the pathway amino-acid biosynthesis; L-histidine biosynthesis; L-histidine from 5-phospho-alpha-D-ribose 1-diphosphate: step 1/9. Functionally, catalyzes the condensation of ATP and 5-phosphoribose 1-diphosphate to form N'-(5'-phosphoribosyl)-ATP (PR-ATP). Has a crucial role in the pathway because the rate of histidine biosynthesis seems to be controlled primarily by regulation of HisG enzymatic activity. The chain is ATP phosphoribosyltransferase from Rippkaea orientalis (strain PCC 8801 / RF-1) (Cyanothece sp. (strain PCC 8801)).